Reading from the N-terminus, the 364-residue chain is Fructose-bisphosphate aldolase B (364 aa).

Position 2 is an N-acetylalanine (Ala-2). At Lys-13 the chain carries N6-succinyllysine. Ser-36 carries the phosphoserine modification. Thr-39 is modified (phosphothreonine). Arg-43 lines the beta-D-fructose 1,6-bisphosphate pocket. Ser-89 bears the Phosphoserine mark. Thr-119 is subject to Phosphothreonine. Lys-121 carries the N6-succinyllysine modification. Ser-132 carries the post-translational modification Phosphoserine. Residue Glu-188 is the Proton acceptor of the active site. Ser-206 bears the Phosphoserine mark. Lys-230 functions as the Schiff-base intermediate with dihydroxyacetone-P in the catalytic mechanism. Ser-272, Ser-276, Ser-299, and Ser-301 each carry phosphoserine. Beta-D-fructose 1,6-bisphosphate is bound at residue 272 to 274 (SGG). Arg-304 contacts beta-D-fructose 1,6-bisphosphate. A Phosphoserine modification is found at Ser-309. Lys-317 is modified (N6-succinyllysine).

The protein belongs to the class I fructose-bisphosphate aldolase family. As to quaternary structure, homotetramer. Interacts with BBS1, BBS2, BBS4 and BBS7. Forms a ternary complex with G6PD and TP53; this interaction is direct.

The protein resides in the cytoplasm. It is found in the cytosol. The protein localises to the cytoskeleton. It localises to the microtubule organizing center. Its subcellular location is the centrosome. The protein resides in the centriolar satellite. The enzyme catalyses beta-D-fructose 1,6-bisphosphate = D-glyceraldehyde 3-phosphate + dihydroxyacetone phosphate. The catalysed reaction is beta-D-fructose 1-phosphate = D-glyceraldehyde + dihydroxyacetone phosphate. It functions in the pathway carbohydrate degradation; glycolysis; D-glyceraldehyde 3-phosphate and glycerone phosphate from D-glucose: step 4/4. It participates in carbohydrate biosynthesis; gluconeogenesis. The protein operates within carbohydrate metabolism; fructose metabolism. Functionally, catalyzes the aldol cleavage of fructose 1,6-biphosphate to form two triosephosphates dihydroxyacetone phosphate and D-glyceraldehyde 3-phosphate in glycolysis as well as the reverse stereospecific aldol addition reaction in gluconeogenesis. In fructolysis, metabolizes fructose 1-phosphate derived from the phosphorylation of dietary fructose by fructokinase into dihydroxyacetone phosphate and D-glyceraldehyde. Acts as an adapter independently of its enzymatic activity, exerts a tumor suppressor role by stabilizing the ternary complex with G6PD and TP53 to inhibit G6PD activity and keep oxidative pentose phosphate metabolism in check. This Mus musculus (Mouse) protein is Fructose-bisphosphate aldolase B.